An 82-amino-acid polypeptide reads, in one-letter code: Cytochrome b559 subunit alpha (82 aa).

The chain crosses the membrane as a helical span at residues 21–35 (VIHSITIPSLFIAGW). His-23 contributes to the heme binding site.

The protein belongs to the PsbE/PsbF family. As to quaternary structure, heterodimer of an alpha subunit and a beta subunit. PSII is composed of 1 copy each of membrane proteins PsbA, PsbB, PsbC, PsbD, PsbE, PsbF, PsbH, PsbI, PsbJ, PsbK, PsbL, PsbM, PsbT, PsbX, PsbY, PsbZ, Psb30/Ycf12, at least 3 peripheral proteins of the oxygen-evolving complex and a large number of cofactors. It forms dimeric complexes. Heme b serves as cofactor.

The protein resides in the plastid. It localises to the chloroplast thylakoid membrane. Functionally, this b-type cytochrome is tightly associated with the reaction center of photosystem II (PSII). PSII is a light-driven water:plastoquinone oxidoreductase that uses light energy to abstract electrons from H(2)O, generating O(2) and a proton gradient subsequently used for ATP formation. It consists of a core antenna complex that captures photons, and an electron transfer chain that converts photonic excitation into a charge separation. In Stigeoclonium helveticum (Green alga), this protein is Cytochrome b559 subunit alpha.